The sequence spans 69 residues: MSNRQTGTVKWFNDEKGFGFITPQSGDDLFVHFKAIQSDGFKSLKEGQQVSFIATRGQKGMQAEEVQVI.

A CSD domain is found at 7–66; that stretch reads GTVKWFNDEKGFGFITPQSGDDLFVHFKAIQSDGFKSLKEGQQVSFIATRGQKGMQAEEV.

The protein resides in the cytoplasm. Its function is as follows. Affects cell viability at low temperatures. This Pseudomonas fragi protein is Cold shock protein CapB (capB).